The chain runs to 360 residues: S-adenosylmethionine:tRNA ribosyltransferase-isomerase (360 aa).

This sequence belongs to the QueA family. As to quaternary structure, monomer.

Its subcellular location is the cytoplasm. The enzyme catalyses 7-aminomethyl-7-carbaguanosine(34) in tRNA + S-adenosyl-L-methionine = epoxyqueuosine(34) in tRNA + adenine + L-methionine + 2 H(+). It functions in the pathway tRNA modification; tRNA-queuosine biosynthesis. Transfers and isomerizes the ribose moiety from AdoMet to the 7-aminomethyl group of 7-deazaguanine (preQ1-tRNA) to give epoxyqueuosine (oQ-tRNA). The polypeptide is S-adenosylmethionine:tRNA ribosyltransferase-isomerase (Nitrobacter winogradskyi (strain ATCC 25391 / DSM 10237 / CIP 104748 / NCIMB 11846 / Nb-255)).